The chain runs to 34 residues: AVERPRQDGQVHEPPGRERKAGCKNFFWKTFTSC.

Residues 1 to 20 (AVERPRQDGQVHEPPGRERK) form a disordered region. Cysteine 23 and cysteine 34 are disulfide-bonded.

It belongs to the somatostatin family.

The protein localises to the secreted. Functionally, somatostatin inhibits the release of somatotropin. This Myxine glutinosa (Atlantic hagfish) protein is Somatostatin (sst).